The following is a 462-amino-acid chain: Argininosuccinate lyase (462 aa).

The protein belongs to the lyase 1 family. Argininosuccinate lyase subfamily.

It localises to the cytoplasm. It catalyses the reaction 2-(N(omega)-L-arginino)succinate = fumarate + L-arginine. Its pathway is amino-acid biosynthesis; L-arginine biosynthesis; L-arginine from L-ornithine and carbamoyl phosphate: step 3/3. The protein is Argininosuccinate lyase of Ehrlichia ruminantium (strain Welgevonden).